Here is a 622-residue protein sequence, read N- to C-terminus: Chaperone protein HscA homolog (622 aa).

The protein belongs to the heat shock protein 70 family.

Chaperone involved in the maturation of iron-sulfur cluster-containing proteins. Has a low intrinsic ATPase activity which is markedly stimulated by HscB. The polypeptide is Chaperone protein HscA homolog (Methylobacillus flagellatus (strain ATCC 51484 / DSM 6875 / VKM B-1610 / KT)).